Here is a 261-residue protein sequence, read N- to C-terminus: Zinc finger protein 664 (261 aa).

9 consecutive C2H2-type zinc fingers follow at residues 3 to 25, 31 to 53, 59 to 81, 87 to 109, 115 to 137, 143 to 165, 171 to 193, 199 to 221, and 227 to 249; these read YKCP…QKIH, HKCD…WRDH, YKCD…KKIH, YKCY…MRVH, YVCS…QRVH, FKCE…QRVH, YKCY…QRVH, YRCC…QRVH, and FKCD…QRVH. Lysine 257 participates in a covalent cross-link: Glycyl lysine isopeptide (Lys-Gly) (interchain with G-Cter in SUMO2).

It belongs to the krueppel C2H2-type zinc-finger protein family.

Its subcellular location is the nucleus. In terms of biological role, may be involved in transcriptional regulation. The protein is Zinc finger protein 664 of Homo sapiens (Human).